Here is a 522-residue protein sequence, read N- to C-terminus: Golgin subfamily A member 6-like protein 10 (522 aa).

Residues 1–11 show a composition bias toward pro residues; the sequence is MWPQPRLPPHP. Positions 1–77 are disordered; it reads MWPQPRLPPH…DSATGIYGEG (77 aa). Residues 51 to 62 are compositionally biased toward polar residues; that stretch reads NGSSPDTATSGG. A coiled-coil region spans residues 157 to 328; it reads SKVEQLQDET…RLCEQEKLPG (172 aa). The segment covering 439–452 has biased composition (basic and acidic residues); that stretch reads KELEKSGGAEEPRG. The interval 439-503 is disordered; it reads KELEKSGGAE…TGEAAGGAEE (65 aa). Composition is skewed to low complexity over residues 456-471 and 489-503; these read AAAARPVPGAPVPQGA and GEAVGTGEAAGGAEE.

It belongs to the GOLGA6 family.

This is Golgin subfamily A member 6-like protein 10 from Homo sapiens (Human).